We begin with the raw amino-acid sequence, 206 residues long: Large ribosomal subunit protein bL25 (206 aa).

Belongs to the bacterial ribosomal protein bL25 family. CTC subfamily. Part of the 50S ribosomal subunit; part of the 5S rRNA/L5/L18/L25 subcomplex. Contacts the 5S rRNA. Binds to the 5S rRNA independently of L5 and L18.

In terms of biological role, this is one of the proteins that binds to the 5S RNA in the ribosome where it forms part of the central protuberance. This chain is Large ribosomal subunit protein bL25, found in Bartonella henselae (strain ATCC 49882 / DSM 28221 / CCUG 30454 / Houston 1) (Rochalimaea henselae).